We begin with the raw amino-acid sequence, 361 residues long: Chorismate synthase (361 aa).

Residues arginine 48 and arginine 54 each coordinate NADP(+). FMN is bound by residues 125-127 (RSS), 238-239 (NA), glycine 278, 293-297 (KPTSS), and arginine 319.

This sequence belongs to the chorismate synthase family. As to quaternary structure, homotetramer. FMNH2 is required as a cofactor.

The enzyme catalyses 5-O-(1-carboxyvinyl)-3-phosphoshikimate = chorismate + phosphate. Its pathway is metabolic intermediate biosynthesis; chorismate biosynthesis; chorismate from D-erythrose 4-phosphate and phosphoenolpyruvate: step 7/7. Its function is as follows. Catalyzes the anti-1,4-elimination of the C-3 phosphate and the C-6 proR hydrogen from 5-enolpyruvylshikimate-3-phosphate (EPSP) to yield chorismate, which is the branch point compound that serves as the starting substrate for the three terminal pathways of aromatic amino acid biosynthesis. This reaction introduces a second double bond into the aromatic ring system. This is Chorismate synthase from Escherichia coli O139:H28 (strain E24377A / ETEC).